Consider the following 557-residue polypeptide: Dihydroxy-acid dehydratase (557 aa).

Position 78 (D78) interacts with Mg(2+). C119 serves as a coordination point for [2Fe-2S] cluster. Residues D120 and K121 each coordinate Mg(2+). N6-carboxylysine is present on K121. Residue C192 coordinates [2Fe-2S] cluster. Mg(2+) is bound at residue E442. S468 acts as the Proton acceptor in catalysis.

Belongs to the IlvD/Edd family. Homodimer. The cofactor is [2Fe-2S] cluster. Mg(2+) is required as a cofactor.

The catalysed reaction is (2R)-2,3-dihydroxy-3-methylbutanoate = 3-methyl-2-oxobutanoate + H2O. It carries out the reaction (2R,3R)-2,3-dihydroxy-3-methylpentanoate = (S)-3-methyl-2-oxopentanoate + H2O. It participates in amino-acid biosynthesis; L-isoleucine biosynthesis; L-isoleucine from 2-oxobutanoate: step 3/4. It functions in the pathway amino-acid biosynthesis; L-valine biosynthesis; L-valine from pyruvate: step 3/4. Functionally, functions in the biosynthesis of branched-chain amino acids. Catalyzes the dehydration of (2R,3R)-2,3-dihydroxy-3-methylpentanoate (2,3-dihydroxy-3-methylvalerate) into 2-oxo-3-methylpentanoate (2-oxo-3-methylvalerate) and of (2R)-2,3-dihydroxy-3-methylbutanoate (2,3-dihydroxyisovalerate) into 2-oxo-3-methylbutanoate (2-oxoisovalerate), the penultimate precursor to L-isoleucine and L-valine, respectively. The polypeptide is Dihydroxy-acid dehydratase (Bacillus cereus (strain G9842)).